Reading from the N-terminus, the 196-residue chain is Holliday junction branch migration complex subunit RuvA (196 aa).

Residues 1 to 63 (MINKIYGKIV…DDDVKLFGFL (63 aa)) are domain I. Positions 64 to 142 (NISEREVFED…KGDESSSYML (79 aa)) are domain II. Lys-143 is a region of interest (flexible linker). The tract at residues 143-196 (KFKELEQSIVNMGFDRKLVVVAFREIMLSDKFLILKEAEQEQFLFTETLKRLSV) is domain III.

Belongs to the RuvA family. As to quaternary structure, homotetramer. Forms an RuvA(8)-RuvB(12)-Holliday junction (HJ) complex. HJ DNA is sandwiched between 2 RuvA tetramers; dsDNA enters through RuvA and exits via RuvB. An RuvB hexamer assembles on each DNA strand where it exits the tetramer. Each RuvB hexamer is contacted by two RuvA subunits (via domain III) on 2 adjacent RuvB subunits; this complex drives branch migration. In the full resolvosome a probable DNA-RuvA(4)-RuvB(12)-RuvC(2) complex forms which resolves the HJ.

It is found in the cytoplasm. The RuvA-RuvB-RuvC complex processes Holliday junction (HJ) DNA during genetic recombination and DNA repair, while the RuvA-RuvB complex plays an important role in the rescue of blocked DNA replication forks via replication fork reversal (RFR). RuvA specifically binds to HJ cruciform DNA, conferring on it an open structure. The RuvB hexamer acts as an ATP-dependent pump, pulling dsDNA into and through the RuvAB complex. HJ branch migration allows RuvC to scan DNA until it finds its consensus sequence, where it cleaves and resolves the cruciform DNA. The sequence is that of Holliday junction branch migration complex subunit RuvA from Borrelia duttonii (strain Ly).